A 191-amino-acid polypeptide reads, in one-letter code: Holliday junction branch migration complex subunit RuvA (191 aa).

The tract at residues 1-64 is domain I; that stretch reads MIGSITGNVE…DNITQLYGFL (64 aa). Residues 65-142 are domain II; it reads NRQEQDYFKM…KMPIEETFSI (78 aa). The interval 143–146 is flexible linker; it reads IEND. A domain III region spans residues 146–191; the sequence is DDSLAALISLGYEKLKAFNVIQEIKSKTPDASTQEVIRKALQKLSQ.

Belongs to the RuvA family. Homotetramer. Forms an RuvA(8)-RuvB(12)-Holliday junction (HJ) complex. HJ DNA is sandwiched between 2 RuvA tetramers; dsDNA enters through RuvA and exits via RuvB. An RuvB hexamer assembles on each DNA strand where it exits the tetramer. Each RuvB hexamer is contacted by two RuvA subunits (via domain III) on 2 adjacent RuvB subunits; this complex drives branch migration. In the full resolvosome a probable DNA-RuvA(4)-RuvB(12)-RuvC(2) complex forms which resolves the HJ.

It is found in the cytoplasm. Its function is as follows. The RuvA-RuvB-RuvC complex processes Holliday junction (HJ) DNA during genetic recombination and DNA repair, while the RuvA-RuvB complex plays an important role in the rescue of blocked DNA replication forks via replication fork reversal (RFR). RuvA specifically binds to HJ cruciform DNA, conferring on it an open structure. The RuvB hexamer acts as an ATP-dependent pump, pulling dsDNA into and through the RuvAB complex. HJ branch migration allows RuvC to scan DNA until it finds its consensus sequence, where it cleaves and resolves the cruciform DNA. This chain is Holliday junction branch migration complex subunit RuvA, found in Ehrlichia ruminantium (strain Gardel).